A 1651-amino-acid chain; its full sequence is Alsin (1651 aa).

RCC1 repeat units lie at residues 59-108 (DGEV…AVTE), 109-167 (SGVV…ALSI), and 169-218 (REIW…ALVQ). The interval 444 to 476 (REEQVKQESLQGKKSSSLMDIREEESEGGSRRL) is disordered. The span at 450–461 (QESLQGKKSSSL) shows a compositional bias: polar residues. A phosphoserine mark is found at serine 459, serine 460, serine 477, and serine 486. Position 504 is a phosphothreonine (threonine 504). RCC1 repeat units lie at residues 519 to 570 (RTEV…ALTA) and 572 to 621 (SQVY…FLVD). The residue at position 527 (lysine 527) is an N6-acetyllysine. The DH domain maps to 684–879 (GYIASLHELA…ESLALHLGKK (196 aa)). A PH domain is found at 895–1001 (GKMTDSLRKP…RAISQAVDQA (107 aa)). MORN repeat units follow at residues 1043–1065 (YDGR…DGKV), 1066–1088 (YSGT…NKAL), 1094–1116 (YVGH…SGEV), 1117–1139 (FEGC…KLTS), 1145–1167 (FIGQ…TRGE), 1169–1191 (YMGM…FGLY), 1192–1214 (YEGN…DDTI), and 1215–1238 (YEGE…NGDY). Phosphoserine is present on serine 1329. The VPS9 domain occupies 1507–1651 (KQPDIALLGF…YYQIQREKLN (145 aa)).

As to quaternary structure, forms a heteromeric complex with ALS2CL. Interacts with ALS2CL.

Functionally, may act as a GTPase regulator. Controls survival and growth of spinal motoneurons. The chain is Alsin (Als2) from Rattus norvegicus (Rat).